Consider the following 529-residue polypeptide: Bifunctional purine biosynthesis protein PurH (529 aa).

The MGS-like domain maps to 1–148 (MNNARPIRRA…KNHKDTTIIV (148 aa)).

This sequence belongs to the PurH family.

It catalyses the reaction (6R)-10-formyltetrahydrofolate + 5-amino-1-(5-phospho-beta-D-ribosyl)imidazole-4-carboxamide = 5-formamido-1-(5-phospho-D-ribosyl)imidazole-4-carboxamide + (6S)-5,6,7,8-tetrahydrofolate. The enzyme catalyses IMP + H2O = 5-formamido-1-(5-phospho-D-ribosyl)imidazole-4-carboxamide. The protein operates within purine metabolism; IMP biosynthesis via de novo pathway; 5-formamido-1-(5-phospho-D-ribosyl)imidazole-4-carboxamide from 5-amino-1-(5-phospho-D-ribosyl)imidazole-4-carboxamide (10-formyl THF route): step 1/1. Its pathway is purine metabolism; IMP biosynthesis via de novo pathway; IMP from 5-formamido-1-(5-phospho-D-ribosyl)imidazole-4-carboxamide: step 1/1. In Shewanella halifaxensis (strain HAW-EB4), this protein is Bifunctional purine biosynthesis protein PurH.